Here is a 228-residue protein sequence, read N- to C-terminus: Biopolymer transport protein exbB1 (228 aa).

3 helical membrane passes run 11–31 (LGLM…LLAE), 116–136 (LTLI…LGLI), and 158–178 (LGVA…AVAG).

This sequence belongs to the ExbB/TolQ family. The accessory proteins ExbB and ExbD seem to form a complex with TonB.

The protein resides in the cell inner membrane. Involved in the TonB-dependent energy-dependent transport of various receptor-bound substrates. Protects ExbD from proteolytic degradation and functionally stabilizes TonB. This is Biopolymer transport protein exbB1 (exbB1) from Vibrio cholerae serotype O1 (strain ATCC 39315 / El Tor Inaba N16961).